Consider the following 119-residue polypeptide: Beta-2-microglobulin (119 aa).

The N-terminal stretch at 1 to 20 (MASSVVVALLVLLSLSGLEA) is a signal peptide. An Ig-like C1-type domain is found at 25 to 114 (PKIQVYSRHP…VTFSTPKTVK (90 aa)). Cysteines 45 and 100 form a disulfide.

Belongs to the beta-2-microglobulin family. Heterodimer of an alpha chain and a beta chain. Beta-2-microglobulin is the beta-chain of major histocompatibility complex class I molecules.

It is found in the secreted. Functionally, component of the class I major histocompatibility complex (MHC). Involved in the presentation of peptide antigens to the immune system. The sequence is that of Beta-2-microglobulin (B2M) from Callithrix aurita (White-eared marmoset).